A 116-amino-acid chain; its full sequence is uncharacterized protein (116 aa).

The region spanning Asp2–Asp73 is the N-acetylmuramoyl-L-alanine amidase domain.

This sequence to phage T3 and T7 N-acetylmuramoyl-L-alanine amidases.

This is an uncharacterized protein from Haemophilus influenzae (strain ATCC 51907 / DSM 11121 / KW20 / Rd).